Reading from the N-terminus, the 448-residue chain is Tubulin beta-1 chain (448 aa).

GTP is bound by residues Gln11, Glu69, Ser138, Gly142, Thr143, Gly144, Asn204, and Asn226. Residue Glu69 coordinates Mg(2+). A disordered region spans residues 427 to 448 (DATADEEGDLQEGESEYIEQEE). Over residues 429 to 448 (TADEEGDLQEGESEYIEQEE) the composition is skewed to acidic residues.

This sequence belongs to the tubulin family. As to quaternary structure, dimer of alpha and beta chains. A typical microtubule is a hollow water-filled tube with an outer diameter of 25 nm and an inner diameter of 15 nM. Alpha-beta heterodimers associate head-to-tail to form protofilaments running lengthwise along the microtubule wall with the beta-tubulin subunit facing the microtubule plus end conferring a structural polarity. Microtubules usually have 13 protofilaments but different protofilament numbers can be found in some organisms and specialized cells. Requires Mg(2+) as cofactor.

The protein localises to the cytoplasm. Its subcellular location is the cytoskeleton. Functionally, tubulin is the major constituent of microtubules, a cylinder consisting of laterally associated linear protofilaments composed of alpha- and beta-tubulin heterodimers. Microtubules grow by the addition of GTP-tubulin dimers to the microtubule end, where a stabilizing cap forms. Below the cap, tubulin dimers are in GDP-bound state, owing to GTPase activity of alpha-tubulin. This chain is Tubulin beta-1 chain, found in Brugia pahangi (Filarial nematode worm).